The following is a 35-amino-acid chain: Anti-H(O) lectin 3 (35 aa).

Belongs to the leguminous lectin family. In terms of assembly, homodimer. Post-translationally, highly glycosylated.

Binds lactose or galactose. The chain is Anti-H(O) lectin 3 from Ulex europaeus (Furze).